Consider the following 597-residue polypeptide: Alpha-1,2-mannosyltransferase MNN2 (597 aa).

Residues 1–6 (MIAKQK) are Cytoplasmic-facing. A helical transmembrane segment spans residues 7-27 (IKILIGVIIVIATYHFIVSSN). Over 28–597 (VRSKDLSDLV…ETAEIPTVVS (570 aa)) the chain is Extracellular. Residues 39 to 89 (LGSSDKSTTENERPKNNIVTNNRLDNPPNEDIPHAEPDSPPQEPPKSGNKP) are disordered. Residue asparagine 382 is glycosylated (N-linked (GlcNAc...) asparagine).

The protein belongs to the MNN1/MNT family. Mn(2+) is required as a cofactor.

It is found in the golgi apparatus membrane. Its pathway is protein modification; protein glycosylation. Enzyme activity is regulated by iron. In terms of biological role, alpha-1,2-mannosyltransferase required for cell wall integrity. Responsible for addition of the first alpha-1,2-linked mannose to form the branches on the mannan backbone of oligosaccharides. Addition of alpha-1,2-mannose is required for stabilization of the alpha-1,6-mannose backbone and hence regulates mannan fibril length; and is important for both immune recognition and virulence. Promotes iron uptake and usage along the endocytosis pathway under iron-limiting conditions. The sequence is that of Alpha-1,2-mannosyltransferase MNN2 (MNN2) from Candida albicans (strain SC5314 / ATCC MYA-2876) (Yeast).